Consider the following 387-residue polypeptide: 3-ketoacyl-CoA thiolase (387 aa).

Cysteine 91 acts as the Acyl-thioester intermediate in catalysis. Residues histidine 343 and cysteine 373 each act as proton acceptor in the active site.

It belongs to the thiolase-like superfamily. Thiolase family. In terms of assembly, heterotetramer of two alpha chains (FadB) and two beta chains (FadA).

It localises to the cytoplasm. It catalyses the reaction an acyl-CoA + acetyl-CoA = a 3-oxoacyl-CoA + CoA. It functions in the pathway lipid metabolism; fatty acid beta-oxidation. Catalyzes the final step of fatty acid oxidation in which acetyl-CoA is released and the CoA ester of a fatty acid two carbons shorter is formed. This Salmonella choleraesuis (strain SC-B67) protein is 3-ketoacyl-CoA thiolase.